We begin with the raw amino-acid sequence, 253 residues long: Chitooligosaccharide deacetylase (253 aa).

The Mg(2+) site is built by histidine 61 and histidine 126.

The protein belongs to the YdjC deacetylase family. ChbG subfamily. Homodimer. The cofactor is Mg(2+).

The protein resides in the cytoplasm. The enzyme catalyses N,N'-diacetylchitobiose + H2O = N-acetyl-beta-D-glucosaminyl-(1-&gt;4)-D-glucosamine + acetate. It carries out the reaction diacetylchitobiose-6'-phosphate + H2O = N'-monoacetylchitobiose-6'-phosphate + acetate. The protein operates within glycan degradation; chitin degradation. Functionally, involved in the degradation of chitin. ChbG is essential for growth on the acetylated chitooligosaccharides chitobiose and chitotriose but is dispensable for growth on cellobiose and chitosan dimer, the deacetylated form of chitobiose. Deacetylation of chitobiose-6-P and chitotriose-6-P is necessary for both the activation of the chb promoter by the regulatory protein ChbR and the hydrolysis of phosphorylated beta-glucosides by the phospho-beta-glucosidase ChbF. Catalyzes the removal of only one acetyl group from chitobiose-6-P to yield monoacetylchitobiose-6-P, the inducer of ChbR and the substrate of ChbF. The chain is Chitooligosaccharide deacetylase from Yersinia pseudotuberculosis serotype O:1b (strain IP 31758).